The sequence spans 149 residues: MHCPFCSATDTKVIDSRLVADGHQVRRRRECVQCHERFTTFEGAELVMPRVVKQDGSRQPFDEEKLRGGMLRAVEKRPVSMDQIEQALTKIKSTLRATGEREVKSEMIGNLMMDQLVNLDKVAYIRFASVYRAFEDVSEFGEAIAKLQK.

A zinc finger lies at 3–34; the sequence is CPFCSATDTKVIDSRLVADGHQVRRRRECVQC. An ATP-cone domain is found at 49-139; the sequence is PRVVKQDGSR…VYRAFEDVSE (91 aa).

It belongs to the NrdR family. The cofactor is Zn(2+).

Its function is as follows. Negatively regulates transcription of bacterial ribonucleotide reductase nrd genes and operons by binding to NrdR-boxes. The chain is Transcriptional repressor NrdR from Shewanella pealeana (strain ATCC 700345 / ANG-SQ1).